The sequence spans 484 residues: HTH-type transcriptional regulator TauR (484 aa).

Positions 16–84 (GSLQHRLRQM…GRSGTFVSAA (69 aa)) constitute an HTH gntR-type domain. Residues 44–63 (TRALAAHLGVARITVTLAYA) constitute a DNA-binding region (H-T-H motif). An N6-(pyridoxal phosphate)lysine modification is found at lysine 330.

This sequence in the C-terminal section; belongs to the class-I pyridoxal-phosphate-dependent aminotransferase family. Requires pyridoxal 5'-phosphate as cofactor.

Its function is as follows. Transcriptional activator, which is essential for taurine-dependent expression of the tpa-tauR-xsc operon. Acts by binding to direct repeats in the promoter region. The polypeptide is HTH-type transcriptional regulator TauR (Rhodobacter capsulatus (strain ATCC BAA-309 / NBRC 16581 / SB1003)).